A 385-amino-acid polypeptide reads, in one-letter code: Exopolygalacturonase rpg16 (385 aa).

The signal sequence occupies residues 1–26; the sequence is MVRFTSFTSPFSAILLLSFGINKVAT. N-linked (GlcNAc...) asparagine glycans are attached at residues N143, N161, N164, and N180. A PbH1 1 repeat occupies 165-195; the sequence is STNLLLHDFIIHTVSNNSNPAKNTDALDLYH. D210 serves as the catalytic Proton donor. The cysteines at positions 212 and 229 are disulfide-linked. N218 and N226 each carry an N-linked (GlcNAc...) asparagine glycan. PbH1 repeat units lie at residues 219–241, 249–270, and 278–299; these read VTKV…GSLG, VTQV…RVKT, and VEDI…IITT. H233 is a catalytic residue. N-linked (GlcNAc...) asparagine glycosylation is found at N256, N282, and N343. The cysteines at positions 344 and 350 are disulfide-linked. The stretch at 350 to 376 is one PbH1 5 repeat; it reads CSDVTLTNINISKASNNTKNVCVNLKG. Residues N359 and N365 are each glycosylated (N-linked (GlcNAc...) asparagine).

This sequence belongs to the glycosyl hydrolase 28 family. In terms of processing, N-glycosylated.

The protein localises to the secreted. It catalyses the reaction [(1-&gt;4)-alpha-D-galacturonosyl](n) + H2O = alpha-D-galacturonate + [(1-&gt;4)-alpha-D-galacturonosyl](n-1). Functionally, specific in hydrolyzing the terminal glycosidic bond of polygalacturonic acid and oligogalacturonates. The protein is Exopolygalacturonase rpg16 of Rhizopus delemar (strain RA 99-880 / ATCC MYA-4621 / FGSC 9543 / NRRL 43880) (Mucormycosis agent).